The following is a 484-amino-acid chain: UDP-N-acetylmuramate--L-alanine ligase (484 aa).

122-128 provides a ligand contact to ATP; the sequence is GTHGKTT.

It belongs to the MurCDEF family.

The protein resides in the cytoplasm. It carries out the reaction UDP-N-acetyl-alpha-D-muramate + L-alanine + ATP = UDP-N-acetyl-alpha-D-muramoyl-L-alanine + ADP + phosphate + H(+). It participates in cell wall biogenesis; peptidoglycan biosynthesis. Its function is as follows. Cell wall formation. The polypeptide is UDP-N-acetylmuramate--L-alanine ligase (Mycobacterium sp. (strain JLS)).